A 100-amino-acid chain; its full sequence is Urease subunit gamma (100 aa).

Belongs to the urease gamma subunit family. As to quaternary structure, heterotrimer of UreA (gamma), UreB (beta) and UreC (alpha) subunits. Three heterotrimers associate to form the active enzyme.

The protein localises to the cytoplasm. It catalyses the reaction urea + 2 H2O + H(+) = hydrogencarbonate + 2 NH4(+). The protein operates within nitrogen metabolism; urea degradation; CO(2) and NH(3) from urea (urease route): step 1/1. This chain is Urease subunit gamma, found in Rhodopseudomonas palustris (strain BisA53).